Consider the following 486-residue polypeptide: G2/mitotic-specific cyclin-4 (486 aa).

2 disordered regions span residues 1–80 (MRSY…SSNK) and 105–126 (VLLNDDDDETDDEFDDEEDKEN). The span at 25–41 (ANLSSNHTTAGQPSTSS) shows a compositional bias: polar residues. The segment covering 108 to 123 (NDDDDETDDEFDDEED) has biased composition (acidic residues). Positions 122 to 184 (EDKENRYHDL…QSHTQDMRSI (63 aa)) form a coiled coil. A Cyclin N-terminal domain is found at 234-359 (EIFNYLHELE…FMIDVLEFDL (126 aa)).

It belongs to the cyclin family. Cyclin AB subfamily. As to quaternary structure, interacts with IQG1.

In terms of biological role, 2/mitotic-specific cyclin essential for the control of the cell cycle at the G2/M (mitosis) transition. G2/M cyclins accumulate steadily during G2 and are abruptly destroyed at mitosis. Degradation is necessary for the cell to exit from mitosis. Plays a role in morphogenesis by negatively regulating polarized growth. Through binding to CDC28 regulates cytokinesis, partly by phosphorylation of the actomyosin ring component IQG1. This chain is G2/mitotic-specific cyclin-4 (CLB4), found in Candida albicans (strain SC5314 / ATCC MYA-2876) (Yeast).